A 347-amino-acid chain; its full sequence is NADH-ubiquinone oxidoreductase chain 2 (347 aa).

11 helical membrane passes run 1 to 21 (MNPLIFSTILATIIMGTVIVM), 25 to 45 (HWLTIWIGFEMNMLAIIPMLM), 59 to 79 (YFLTQATASMLLMLAVIINLT), 96 to 116 (IIMTIALTMKLGLSPFHFWVP), 127 to 147 (CLILLTWQKLAPLSILYMISP), 149 to 169 (INLNLLLSMSLISIAIGGWGG), 178 to 198 (IMAYSSIAHMGWMTAVLAYNP), 200 to 220 (MTMLNLLVYITMTTTMFMLLI), 237 to 257 (IPLVTTLTLTIMLSLGGLPPL), 276 to 296 (IILPTLMAIMALLSLYFYMRL), and 325 to 345 (LLSPLIVTSTLTLPLAPTMLL).

It belongs to the complex I subunit 2 family. In terms of assembly, core subunit of respiratory chain NADH dehydrogenase (Complex I) which is composed of 45 different subunits. Interacts with TMEM242.

It localises to the mitochondrion inner membrane. The enzyme catalyses a ubiquinone + NADH + 5 H(+)(in) = a ubiquinol + NAD(+) + 4 H(+)(out). Its function is as follows. Core subunit of the mitochondrial membrane respiratory chain NADH dehydrogenase (Complex I) which catalyzes electron transfer from NADH through the respiratory chain, using ubiquinone as an electron acceptor. Essential for the catalytic activity and assembly of complex I. This is NADH-ubiquinone oxidoreductase chain 2 from Natalus tumidirostris (Trinidadian funnel-eared bat).